Here is a 658-residue protein sequence, read N- to C-terminus: Threonine--tRNA ligase (658 aa).

Positions 1-61 (MIELVFPDGS…EKGGAFKILT (61 aa)) constitute a TGS domain. The catalytic stretch occupies residues 243 to 535 (DHRKLGRQMD…LIENYAGAFP (293 aa)). Positions 335, 386, and 512 each coordinate Zn(2+).

This sequence belongs to the class-II aminoacyl-tRNA synthetase family. In terms of assembly, homodimer. The cofactor is Zn(2+).

It is found in the cytoplasm. It catalyses the reaction tRNA(Thr) + L-threonine + ATP = L-threonyl-tRNA(Thr) + AMP + diphosphate + H(+). Functionally, catalyzes the attachment of threonine to tRNA(Thr) in a two-step reaction: L-threonine is first activated by ATP to form Thr-AMP and then transferred to the acceptor end of tRNA(Thr). Also edits incorrectly charged L-seryl-tRNA(Thr). The protein is Threonine--tRNA ligase of Phenylobacterium zucineum (strain HLK1).